A 144-amino-acid polypeptide reads, in one-letter code: Eukaryotic translation initiation factor 1A, Y-chromosomal (144 aa).

A compositionally biased stretch (basic residues) spans 1-15 (MPKNKGKGGKNRRRG). The interval 1-26 (MPKNKGKGGKNRRRGKNENESEKREL) is disordered. A compositionally biased stretch (basic and acidic residues) spans 16 to 26 (KNENESEKREL). The S1-like domain occupies 22-96 (EKRELVFKED…NKADVILKYN (75 aa)). Lys88 participates in a covalent cross-link: Glycyl lysine isopeptide (Lys-Gly) (interchain with G-Cter in ubiquitin). The interval 114–144 (KINETDTFGPGDDDEIQFDDIGDDDEDIDDI) is disordered. Positions 124-144 (GDDDEIQFDDIGDDDEDIDDI) are enriched in acidic residues.

The protein belongs to the eIF-1A family. Component of the 43S pre-initiation complex (43S PIC), which is composed of the 40S ribosomal subunit, EIF1, eIF1A (EIF1AX), eIF3 complex, EIF5 and eIF2-GTP-initiator tRNA complex (eIF2 ternary complex). Interacts with EIF5; this interaction contributes to the maintenance of EIF1 within the open 43S PIC. Interacts through its C-terminal domain (CTD) with the CTD of EIF5B; from the location of the start codon by the 43S complex until the formation of the 80S complex. Ubiquitous.

It localises to the cytoplasm. Functionally, component of the 43S pre-initiation complex (43S PIC), which binds to the mRNA cap-proximal region, scans mRNA 5'-untranslated region, and locates the initiation codon. This protein enhances formation of the cap-proximal complex. Together with EIF1, facilitates scanning, start codon recognition, promotion of the assembly of 48S complex at the initiation codon (43S PIC becomes 48S PIC after the start codon is reached), and dissociation of aberrant complexes. After start codon location, together with EIF5B orients the initiator methionine-tRNA in a conformation that allows 60S ribosomal subunit joining to form the 80S initiation complex. Is released after 80S initiation complex formation, just after GTP hydrolysis by EIF5B, and before release of EIF5B. Its globular part is located in the A site of the 40S ribosomal subunit. Its interaction with EIF5 during scanning contribute to the maintenance of EIF1 within the open 43S PIC. In contrast to yeast orthologs, does not bind EIF1. The sequence is that of Eukaryotic translation initiation factor 1A, Y-chromosomal (EIF1AY) from Homo sapiens (Human).